Consider the following 342-residue polypeptide: MQNEYSQFEQRKRDHIELALMPANQSSELNPFDHFSLVHEALPDLDFKDISIQSIRFNKPVEKPFIISSMTAGHSNAIEINYRLMEACSKTKWAMGVGSQRRELTDKQAAFEWEPLRRDFPMVSLFSNLGIAQLIDTPISAIQRLIDTLHAEALIIHCNPLQECIQPEGTTNFHGCWAALEALVKKINSPVIVKETGCGFSKNTLLRLNNIGVAAVDVSGVGGTHWGRIEGHRADKDPIRHRTADTFRNWGIDTLQSTHNAISLNPSFEIWGSGGVRNGLDAAKLFALGATTVGFAKPMLEAALDSTDQVLTQMNTIEYELKTAMFCTGSLVLDDLKEKACP.

11–12 serves as a coordination point for substrate; that stretch reads RK. Residues Ser68, 69 to 71, Ser99, and Asn128 contribute to the FMN site; that span reads SMT. Substrate is bound at residue 99-101; sequence SQR. Gln162 provides a ligand contact to substrate. A Mg(2+)-binding site is contributed by Glu163. Residues Lys194, Ser219, Thr224, 275–277, and 296–297 contribute to the FMN site; these read GVR and AK.

Belongs to the IPP isomerase type 2 family. In terms of assembly, homooctamer. Dimer of tetramers. Requires FMN as cofactor. It depends on NADPH as a cofactor. Mg(2+) serves as cofactor.

It localises to the cytoplasm. It carries out the reaction isopentenyl diphosphate = dimethylallyl diphosphate. In terms of biological role, involved in the biosynthesis of isoprenoids. Catalyzes the 1,3-allylic rearrangement of the homoallylic substrate isopentenyl (IPP) to its allylic isomer, dimethylallyl diphosphate (DMAPP). In Legionella pneumophila (strain Lens), this protein is Isopentenyl-diphosphate delta-isomerase.